Here is a 233-residue protein sequence, read N- to C-terminus: Large ribosomal subunit protein uL1 (233 aa).

This sequence belongs to the universal ribosomal protein uL1 family. In terms of assembly, part of the 50S ribosomal subunit.

In terms of biological role, binds directly to 23S rRNA. The L1 stalk is quite mobile in the ribosome, and is involved in E site tRNA release. Its function is as follows. Protein L1 is also a translational repressor protein, it controls the translation of the L11 operon by binding to its mRNA. This is Large ribosomal subunit protein uL1 from Psychrobacter arcticus (strain DSM 17307 / VKM B-2377 / 273-4).